The primary structure comprises 228 residues: Cytochrome P450 monooxygenase ataY (228 aa).

Cys-216 contributes to the heme binding site.

It belongs to the cytochrome P450 family. The cofactor is heme.

Its pathway is mycotoxin biosynthesis. Cytochrome P450 monooxygenase; part of the gene cluster that mediates the biosynthesis of acetylaranotin, a member of the epipolythiodioxopiperazine (ETP) class of toxins characterized by a disulfide-bridged cyclic dipeptide. The first step of acetylaranotin biosynthesis is performed by the NRPS ataP which produces diketopiperazine cyclo-L-Phe-L-Phe via the condensation of 2 phenylalanines (L-Phe). The ataC domain of ataTC then catalyzes the formation of bishydroxylation of cyclo-L-Phe-L-Phe. The glutathione S-transferase domain ataG in ataIMG further catalyzes the conjugation of two glutathiones to the bishydroxylated intermediate. Next, the dipeptidase ataJ removes the Glu residues. The following step is performed by the carbon sulfur lyase domain ataI of ataIMG which may convert the bis-cysteinyl adduct to yield an epidithiol intermediate. The ataT domain from ataTC then catalyzes the oxidation of the free dithiols, followed by a cyclization step catalyzed by the cytochrome P450 ataF. AtaF probably acts as an epoxidase to promote a dual epoxidation formation at C8 and C9 along with C8' and C9', followed by the spontaneous nucleophilic attack of the amide nitrogens N10 and N10' to yield an intermediate with the pyrrolidine partial structure. The final steps of acetylaranotin biosynthesis involve the acetylation and ring rearrangement of an epitetrathiodiketopiperazine intermediate to produce acetylaranotin. AtaH probably catalyzes the acetylation of epitetrathiodiketopiperazine to produce a diacetate and ataY is responsible for the formation of the dihydrooxepin moiety that converts the diacetate intermediate to acetylaranotin via acetylapoaranotin. Both enzymes could function independently in the absence of the other. The acetylaranotin bis-thiomethyltransferase ataS located outside of acetylaranotin gene cluster is the main thiomethyltransferase responsible for converting acetylaranotin and its related intermediates to their methylated forms. In Aspergillus terreus (strain NIH 2624 / FGSC A1156), this protein is Cytochrome P450 monooxygenase ataY.